A 614-amino-acid polypeptide reads, in one-letter code: Probable ATP-dependent RNA helicase DDX5 (614 aa).

Residues 1-15 (MSSYSSDRDRGRDRG) show a composition bias toward basic and acidic residues. The interval 1 to 39 (MSSYSSDRDRGRDRGFGAPRFGGSRTGPLSGKKFGNPGE) is disordered. At Ser-24 the chain carries Phosphoserine. Residue Lys-32 is modified to N6-acetyllysine; alternate. A Glycyl lysine isopeptide (Lys-Gly) (interchain with G-Cter in SUMO2); alternate cross-link involves residue Lys-32. N6-acetyllysine is present on residues Lys-33 and Lys-40. Lys-45 participates in a covalent cross-link: Glycyl lysine isopeptide (Lys-Gly) (interchain with G-Cter in SUMO2). Lys-53 is covalently cross-linked (Glycyl lysine isopeptide (Lys-Gly) (interchain with G-Cter in SUMO2); alternate). Lys-53 is covalently cross-linked (Glycyl lysine isopeptide (Lys-Gly) (interchain with G-Cter in SUMO); alternate). Lys-53 is covalently cross-linked (Glycyl lysine isopeptide (Lys-Gly) (interchain with G-Cter in SUMO1); alternate). Positions 94-122 (LNFYEANFPANVMDVIARQNFTEPTAIQA) match the Q motif motif. ATP-binding positions include 114 to 116 (FTE), Gln-121, and 138 to 145 (AQTGSGKT). The Helicase ATP-binding domain occupies 125–300 (WPVALSGLDM…EDFLKDYIHI (176 aa)). At Lys-236 the chain carries N6-acetyllysine. The DEAD box motif lies at 248-251 (DEAD). Tyr-297 carries the phosphotyrosine modification. In terms of domain architecture, Helicase C-terminal spans 328–475 (KLIRLMEEIM…AINPKLLQLV (148 aa)). Glycyl lysine isopeptide (Lys-Gly) (interchain with G-Cter in SUMO2) cross-links involve residues Lys-340, Lys-343, Lys-388, Lys-391, Lys-411, Lys-437, Lys-451, and Lys-470. The tract at residues 477–504 (DRGSGRSRGRGGMKDDRRDRYSAGKRGG) is disordered. A transactivation domain region spans residues 477–614 (DRGSGRSRGR…GYPMPTGYSQ (138 aa)). Phosphoserine is present on Ser-480. A compositionally biased stretch (basic and acidic residues) spans 488–498 (GMKDDRRDRYS). Residue Lys-523 forms a Glycyl lysine isopeptide (Lys-Gly) (interchain with G-Cter in SUMO2) linkage.

The protein belongs to the DEAD box helicase family. DDX5/DBP2 subfamily. As to quaternary structure, identified in the spliceosome C complex. Component of a ribonucleoprotein complex containing mRNAs and RNA-binding proteins including DDX5, HNRNPH2 and SRSF1 as well as splicing regulator ARVCF. Interacts with RBM4; the interaction occurs in an RNA-independent manner. Interacts with AGO1 and AGO2. Interacts with ESR1, AR, EP300, CREBBP, POLR2A, TP53, RUNX2 and HDAC1. Self-associates. Interacts with DDX17. Interacts with BRDT. The large PER complex involved in the repression of transcriptional termination is composed of at least PER2, CDK9, DDX5, DHX9, NCBP1 and POLR2A (active). Interacts with DHX36; this interaction occurs in a RNA-dependent manner. Interacts with NUPR1. Interacts with ERCC6. Interacts with DDX3X in the cytoplasm; this interaction may be more efficient when both proteins are unphosphorylated. In terms of processing, sumoylated; sumoylation, promoted by PIAS1, promotes interaction with HDAC1 and transcriptional repression activity. Sumoylation also significantly increases stability, and reduces polyubiquitination. Polyubiquitinated, leading to proteasomal degradation. Post-translationally, weakly phosphorylated in the G1/S phase of the cell cycle and much more at G2/M, especially at Thr and Tyr residues.

It is found in the nucleus. It localises to the nucleolus. The protein resides in the cytoplasm. It carries out the reaction ATP + H2O = ADP + phosphate + H(+). Its function is as follows. Involved in the alternative regulation of pre-mRNA splicing; its RNA helicase activity is necessary for increasing tau exon 10 inclusion and occurs in a RBM4-dependent manner. Binds to the tau pre-mRNA in the stem-loop region downstream of exon 10. The rate of ATP hydrolysis is highly stimulated by single-stranded RNA. Involved in transcriptional regulation; the function is independent of the RNA helicase activity. Transcriptional coactivator for androgen receptor AR but probably not ESR1. Synergizes with DDX17 and SRA1 RNA to activate MYOD1 transcriptional activity and involved in skeletal muscle differentiation. Transcriptional coactivator for p53/TP53 and involved in p53/TP53 transcriptional response to DNA damage and p53/TP53-dependent apoptosis. Transcriptional coactivator for RUNX2 and involved in regulation of osteoblast differentiation. Acts as a transcriptional repressor in a promoter-specific manner; the function probably involves association with histone deacetylases, such as HDAC1. As component of a large PER complex is involved in the inhibition of 3' transcriptional termination of circadian target genes such as PER1 and NR1D1 and the control of the circadian rhythms. The sequence is that of Probable ATP-dependent RNA helicase DDX5 (Ddx5) from Mus musculus (Mouse).